The chain runs to 178 residues: MKMIISLTFLGILMLAFAEVNSETCTLMEAAKNFDENKYFNIPLAYATHSKNREPETNVCREYSTARGPDGKTVTTFTIKDKTLTSAVKCTNTPIPGSNGQFSSDCELSAGNRITVTTSILATDNEKYAILQRCPTSGPGNILVLQTNKNGVEQGVQNYFNQKGWDISTWLSRTTVGC.

The first 18 residues, 1–18 (MKMIISLTFLGILMLAFA), serve as a signal peptide directing secretion. 3 disulfides stabilise this stretch: Cys-25/Cys-134, Cys-60/Cys-178, and Cys-90/Cys-106.

The protein belongs to the calycin superfamily. Triabin family. As to expression, expressed in salivary glands.

It is found in the secreted. Functionally, inhibits platelet aggregation and vasoconstriction through binding to distinct eicosanoids involved in inflammation (acts as a scavenger), and has a role in inhibiting host innate immunity by impairing platelet-assisted formation of neutrophil extracellular traps (NETs). Inhibits platelet aggregation by collagen, and low doses of thromboxane A2 mimetic (TXA2 mimetic), and arachidonic acid (AA) without affecting aggregation induced by ADP, convulxin (GP6 agonist), and PMA. Binds to TXA2, TXB2, prostaglandine H2 mimetic (PGH2 mimetic), PGJ2, and PGF2alpha. Binding is not observed to leukotrienes, AA, and biogenic amines (PGE1, 5(S)-HETE, 12(S)-HETE, 20-HETE, norepinephrine, epinephrine, serotonin, LTC4 and ADP). Induces relaxation of aorta rat previously contracted with TXA2 mimetic. Moreover, it also impairs platelet-assisted formation of neutrophil extracellular traps (NETs). NETs are web-like structures of DNA and proteins that play an important role in killing of pathogens. In addition, NETs are implicated in thrombus formation. In vivo, this protein exhibits antithrombotic activity in two distinct mice models that are highly dependent on platelets. It is noteworthy that it inhibits thrombosis without promoting excessive bleeding. This is Platelet inhibitor triplatin-2 from Triatoma infestans (Assassin bug).